Consider the following 245-residue polypeptide: PF03932 family protein CutC (245 aa).

The protein belongs to the CutC family.

The protein resides in the cytoplasm. The polypeptide is PF03932 family protein CutC (Caulobacter vibrioides (strain ATCC 19089 / CIP 103742 / CB 15) (Caulobacter crescentus)).